Here is a 411-residue protein sequence, read N- to C-terminus: ATP-dependent Clp protease ATP-binding subunit ClpX (411 aa).

The ClpX-type ZB domain maps to 1–49 (MSDRDIRCSFCGRTQKEVKKLIAGPGVYICDECVKLAYDIIEEDEEEDV). Zn(2+)-binding residues include Cys-8, Cys-11, Cys-30, and Cys-33. 115 to 122 (PTGVGKTL) provides a ligand contact to ATP.

Belongs to the ClpX chaperone family. As to quaternary structure, component of the ClpX-ClpP complex. Forms a hexameric ring that, in the presence of ATP, binds to fourteen ClpP subunits assembled into a disk-like structure with a central cavity, resembling the structure of eukaryotic proteasomes.

ATP-dependent specificity component of the Clp protease. It directs the protease to specific substrates. Can perform chaperone functions in the absence of ClpP. This Dictyoglomus thermophilum (strain ATCC 35947 / DSM 3960 / H-6-12) protein is ATP-dependent Clp protease ATP-binding subunit ClpX.